The sequence spans 386 residues: Succinate--CoA ligase [ADP-forming] subunit beta (386 aa).

Residues 9-237 enclose the ATP-grasp domain; that stretch reads KEVLRDFGVN…LSAEHPLEVE (229 aa). ATP contacts are provided by residues Lys-45, 52–54, Val-94, and Glu-101; that span reads GRG. Mg(2+) contacts are provided by Asn-192 and Asp-206. Substrate is bound by residues Asn-258 and 315-317; that span reads GIT.

It belongs to the succinate/malate CoA ligase beta subunit family. As to quaternary structure, heterotetramer of two alpha and two beta subunits. It depends on Mg(2+) as a cofactor.

It catalyses the reaction succinate + ATP + CoA = succinyl-CoA + ADP + phosphate. The catalysed reaction is GTP + succinate + CoA = succinyl-CoA + GDP + phosphate. It participates in carbohydrate metabolism; tricarboxylic acid cycle; succinate from succinyl-CoA (ligase route): step 1/1. In terms of biological role, succinyl-CoA synthetase functions in the citric acid cycle (TCA), coupling the hydrolysis of succinyl-CoA to the synthesis of either ATP or GTP and thus represents the only step of substrate-level phosphorylation in the TCA. The beta subunit provides nucleotide specificity of the enzyme and binds the substrate succinate, while the binding sites for coenzyme A and phosphate are found in the alpha subunit. This chain is Succinate--CoA ligase [ADP-forming] subunit beta, found in Deinococcus radiodurans (strain ATCC 13939 / DSM 20539 / JCM 16871 / CCUG 27074 / LMG 4051 / NBRC 15346 / NCIMB 9279 / VKM B-1422 / R1).